The sequence spans 383 residues: Dimethylsulfoniopropionate lyase 3 (383 aa).

It belongs to the aspartate/glutamate racemases family. ALMA1 subfamily. Homotetramer.

The catalysed reaction is S,S-dimethyl-beta-propiothetin = acrylate + dimethyl sulfide + H(+). Its function is as follows. Mediates cleavage of dimethylsulfoniopropionate (DMSP) into dimethyl sulfide (DMS) and acrylate. DMS is the principal form by which sulfur is transported from oceans to the atmosphere and is a key component of the ocean sulfur cycle. This Emiliania huxleyi (strain CCMP1516) protein is Dimethylsulfoniopropionate lyase 3.